A 360-amino-acid polypeptide reads, in one-letter code: MVSEGATRKELNLCFENMKMEGVLISEWKDIPVELLMKILNLVDDRTVIIASCICSGWRDAVSLGLTRLSLSWCKKNMNSLVLSLAPKFVKLQTLVLRQDKPQLEDNAVEAIANHCHELQDLDLSKSSKITDHSLYSLARGCTNLTKLNLSGCTSFSDTALAHLTRFCRKLKILNLCGCVEAVSDNTLQAIGENCNQLQSLNLGWCENISDDGVMSLAYGCPDLRTLDLCSCVLITDESVVALANRCIHLRSLGLYYCRNITDRAMYSLAQSGVKNKHEMWRAVKKGKFDEEGLRSLNISQCTYLTPSAVQAVCDTFPALHTCSGRHSLVMSGCLNLQSVHCACILQAHRTHTVYPHPAH.

The 52-residue stretch at 25 to 76 (ISEWKDIPVELLMKILNLVDDRTVIIASCICSGWRDAVSLGLTRLSLSWCKK) folds into the F-box domain. LRR repeat units lie at residues 77–99 (NMNS…VLRQ), 101–126 (KPQL…DLSK), 127–152 (SSKI…NLSG), 153–178 (CTSF…NLCG), 180–205 (VEAV…NLGW), 206–231 (CENI…DLCS), 232–257 (CVLI…GLYY), 258–301 (CRNI…NISQ), and 302–333 (CTYL…VMSG).

Component of SCF(SKP2B) E3 ubiquitin ligase complexes, which mediate the ubiquitination and subsequent proteasomal degradation of the cyclin-dependent kinase inhibitor KRP1. Does not interact with auxin. This is F-box protein SKP2B (SKP2B) from Arabidopsis thaliana (Mouse-ear cress).